A 217-amino-acid chain; its full sequence is Enolase-phosphatase E1 (217 aa).

Residues aspartate 9 and glutamate 11 each contribute to the Mg(2+) site. Residues 112–113 (SS) and lysine 151 contribute to the substrate site. Position 176 (aspartate 176) interacts with Mg(2+).

The protein belongs to the HAD-like hydrolase superfamily. MasA/MtnC family. Monomer. It depends on Mg(2+) as a cofactor.

It localises to the cytoplasm. The protein resides in the nucleus. The enzyme catalyses 5-methylsulfanyl-2,3-dioxopentyl phosphate + H2O = 1,2-dihydroxy-5-(methylsulfanyl)pent-1-en-3-one + phosphate. It functions in the pathway amino-acid biosynthesis; L-methionine biosynthesis via salvage pathway; L-methionine from S-methyl-5-thio-alpha-D-ribose 1-phosphate: step 3/6. It participates in amino-acid biosynthesis; L-methionine biosynthesis via salvage pathway; L-methionine from S-methyl-5-thio-alpha-D-ribose 1-phosphate: step 4/6. Functionally, bifunctional enzyme that catalyzes the enolization of 2,3-diketo-5-methylthiopentyl-1-phosphate (DK-MTP-1-P) into the intermediate 2-hydroxy-3-keto-5-methylthiopentenyl-1-phosphate (HK-MTPenyl-1-P), which is then dephosphorylated to form the acireductone 1,2-dihydroxy-3-keto-5-methylthiopentene (DHK-MTPene). The protein is Enolase-phosphatase E1 of Lachancea thermotolerans (strain ATCC 56472 / CBS 6340 / NRRL Y-8284) (Yeast).